Here is a 194-residue protein sequence, read N- to C-terminus: Cytochrome c biogenesis ATP-binding export protein CcmA (194 aa).

The 190-residue stretch at 5–194 (LALDGVACIR…LDELVMGVLA (190 aa)) folds into the ABC transporter domain. 37–44 (GPNGAGKS) lines the ATP pocket.

Belongs to the ABC transporter superfamily. CcmA exporter (TC 3.A.1.107) family. In terms of assembly, the complex is composed of two ATP-binding proteins (CcmA) and two transmembrane proteins (CcmB).

Its subcellular location is the cell inner membrane. The catalysed reaction is heme b(in) + ATP + H2O = heme b(out) + ADP + phosphate + H(+). Its function is as follows. Part of the ABC transporter complex CcmAB involved in the biogenesis of c-type cytochromes; once thought to export heme, this seems not to be the case, but its exact role is uncertain. Responsible for energy coupling to the transport system. The sequence is that of Cytochrome c biogenesis ATP-binding export protein CcmA from Sphingopyxis alaskensis (strain DSM 13593 / LMG 18877 / RB2256) (Sphingomonas alaskensis).